Reading from the N-terminus, the 232-residue chain is Ubiquinone biosynthesis O-methyltransferase (232 aa).

Arginine 36, glycine 55, aspartate 76, and methionine 120 together coordinate S-adenosyl-L-methionine.

Belongs to the methyltransferase superfamily. UbiG/COQ3 family.

The enzyme catalyses a 3-demethylubiquinol + S-adenosyl-L-methionine = a ubiquinol + S-adenosyl-L-homocysteine + H(+). It carries out the reaction a 3-(all-trans-polyprenyl)benzene-1,2-diol + S-adenosyl-L-methionine = a 2-methoxy-6-(all-trans-polyprenyl)phenol + S-adenosyl-L-homocysteine + H(+). The protein operates within cofactor biosynthesis; ubiquinone biosynthesis. Its function is as follows. O-methyltransferase that catalyzes the 2 O-methylation steps in the ubiquinone biosynthetic pathway. This is Ubiquinone biosynthesis O-methyltransferase from Burkholderia thailandensis (strain ATCC 700388 / DSM 13276 / CCUG 48851 / CIP 106301 / E264).